Reading from the N-terminus, the 689-residue chain is MSISALGGRTKGKPLPPGEEERNNVLKQMKVRTTLKGDKSWITKQDESEGRTIELPSGRSRATSFSSAGEVPKPRPPSTRAPTGYIIRGVFTKPIDSSSQPQQQFPKANGTPKSAASLVRTANAGPPRPSSSGYKMTTEDYKKLAPYNIRRSSTSGDTEEEEEEEVVPFSSDEQKRRSEAASGVLRRTAPREHSYVLSAAKKSTGPTQETQAPFIAKRVEVVEEDGPSEKSQDPPALARSTPGSNSADGGRTKASRAIWIECLPSMPSPAGSQELSSRGEEIVRLQILTPRAGLRLVAPDVEGMRSSPGNKDKEAPCSRELQRDLAGEEAFRAPNTDAARSSAQLSDGNVGSGATGSRPEGLAAVDIGSERGSSSATSVSAVPADRKSNSTAAQEDAKADPKGALADYEGKDVATRVGEAWQERPGAPRGGQGDPAVPAQQPADPSTPERQSSPSGSEQLVRRESCGSSVLTDFEGKDVATKVGEAWQDRPGAPRGGQGDPAVPTQQPADPSTPEQQNSPSGSEQFVRRESCTSRVRSPSSCMVTVTVTATSEQPHIYIPAPASELDSSSTTKGILFVKEYVNASEVSSGKPVSARYSNVSSIEDSFAMEKKPPCGSTPYSERTTGGICTYCNREIRDCPKITLEHLGICCHEYCFKCGICSKPMGDLLDQIFIHRDTIHCGKCYEKLF.

2 disordered regions span residues 1-253 (MSIS…GRTK) and 298-534 (APDV…SCTS). Positions 35–52 (LKGDKSWITKQDESEGRT) are enriched in basic and acidic residues. Residue Ser66 is modified to Phosphoserine. Over residues 95 to 114 (IDSSSQPQQQFPKANGTPKS) the composition is skewed to polar residues. Ser153 is subject to Phosphoserine. Residues 157–166 (DTEEEEEEEV) are compositionally biased toward acidic residues. At Pro206 the chain carries Phosphoserine. Composition is skewed to basic and acidic residues over residues 217–232 (KRVE…EKSQ) and 310–331 (NKDK…EEAF). The span at 338–349 (AARSSAQLSDGN) shows a compositional bias: polar residues. Composition is skewed to low complexity over residues 373–382 (SSSATSVSAV) and 434–444 (DPAVPAQQPAD). At Thr447 the chain carries Phosphothreonine. Polar residues predominate over residues 448 to 458 (PERQSSPSGSE). Phosphoserine occurs at positions 453 and 465. Residues 504 to 524 (PTQQPADPSTPEQQNSPSGSE) show a composition bias toward polar residues. The region spanning 627-689 (GICTYCNREI…HCGKCYEKLF (63 aa)) is the LIM zinc-binding domain.

As to expression, expressed in placenta, pancreas and kidney. Also expressed in prostate, testis, ovary and blood.

It localises to the cytoplasm. The protein localises to the cytoskeleton. It is found in the cell junction. Its subcellular location is the focal adhesion. May be involved in the regulation of cellular proliferation and/or differentiation. The chain is Zinc finger protein 185 (ZNF185) from Homo sapiens (Human).